Reading from the N-terminus, the 341-residue chain is UDP-N-acetylenolpyruvoylglucosamine reductase (341 aa).

An FAD-binding PCMH-type domain is found at 19–191 (MAVRAAHFCQ…TAVRFRLSRR (173 aa)). Residue Arg-167 is part of the active site. Ser-241 serves as the catalytic Proton donor. The active site involves Glu-337.

It belongs to the MurB family. The cofactor is FAD.

Its subcellular location is the cytoplasm. It catalyses the reaction UDP-N-acetyl-alpha-D-muramate + NADP(+) = UDP-N-acetyl-3-O-(1-carboxyvinyl)-alpha-D-glucosamine + NADPH + H(+). The protein operates within cell wall biogenesis; peptidoglycan biosynthesis. Its function is as follows. Cell wall formation. The sequence is that of UDP-N-acetylenolpyruvoylglucosamine reductase from Chromobacterium violaceum (strain ATCC 12472 / DSM 30191 / JCM 1249 / CCUG 213 / NBRC 12614 / NCIMB 9131 / NCTC 9757 / MK).